A 582-amino-acid polypeptide reads, in one-letter code: Histone deacetylase 9-B (582 aa).

The tract at residues 146-195 (SNEVKQKLQEFLLSKSTKDITLNGIPQKITQSSKLWYTASHHTSLEQSSP) is interaction with mef2. A compositionally biased stretch (polar residues) spans 189–205 (SLEQSSPPLGGASSSCK). 4 disordered regions span residues 189 to 254 (SLEQ…KEGN), 270 to 314 (TASS…QSRL), 409 to 447 (LSSGQSPVHPPSPLAMMENSPSSTRPKLPRHRPLNRTQS), and 496 to 567 (VHLQ…NQSS). 2 stretches are compositionally biased toward basic and acidic residues: residues 213 to 224 (DYRDDFPLRKTV) and 238 to 253 (KVAERRSSPLLRRKEG). A compositionally biased stretch (low complexity) spans 270–289 (TASSSAPGSGPSSPNGACSA). The segment covering 295–314 (GPSSLPVTTRTERWPSQSRL) has biased composition (polar residues).

The protein belongs to the histone deacetylase family. HD type 2 subfamily. Homodimer. Interacts with mef2.

It localises to the nucleus. The enzyme catalyses N(6)-acetyl-L-lysyl-[histone] + H2O = L-lysyl-[histone] + acetate. Devoided of intrinsic deacetylase activity, promotes the deacetylation of lysine residues on the N-terminal part of the core histones (H2A, H2B, H3 and H4) by recruiting other histone deacetylases. Histone deacetylation gives a tag for epigenetic repression and plays an important role in transcriptional regulation, cell cycle progression and developmental events. Represses MEF2-dependent transcription. This is Histone deacetylase 9-B (hdac9b) from Danio rerio (Zebrafish).